A 68-amino-acid polypeptide reads, in one-letter code: Large ribosomal subunit protein uL29 (68 aa).

It belongs to the universal ribosomal protein uL29 family.

The chain is Large ribosomal subunit protein uL29 from Erythrobacter litoralis (strain HTCC2594).